The following is a 366-amino-acid chain: Growth hormone secretagogue receptor type 1 (366 aa).

Topologically, residues 1–40 are extracellular; sequence MWNATPSEEPGSNLTRAELGWDAPPGNDSLADELLQLFPA. N-linked (GlcNAc...) asparagine glycosylation is found at Asn13 and Asn27. Residues 41–66 form a helical membrane-spanning segment; it reads PLLAGVTATCVALFVVGIAGNLLTML. Residues 67–72 are Cytoplasmic-facing; the sequence is VVSRFR. Residues 73–96 form a helical membrane-spanning segment; the sequence is ELRTTTNLYLSSMAFSDLLIFLCM. At 97–117 the chain is on the extracellular side; it reads PLDLVRLWQYRPWNFGDLLCK. The cysteines at positions 116 and 198 are disulfide-linked. A helical membrane pass occupies residues 118 to 139; it reads LFQFVSESCTYATVLTITALSV. Over 140-162 the chain is Cytoplasmic; the sequence is ERYFAICFPLRAKVVVTKGRVKL. Residues 163-183 traverse the membrane as a helical segment; it reads VILVIWALAFCSAGPIFVLVG. Residues 184–211 lie on the Extracellular side of the membrane; it reads VEHENGTDPQDTNECRATEFAVRSGLLT. Asn188 carries N-linked (GlcNAc...) asparagine glycosylation. The chain crosses the membrane as a helical span at residues 212–235; the sequence is IMVWVSSVFFFLPVFCLTVLYSLI. Residues 236–263 lie on the Cytoplasmic side of the membrane; that stretch reads GRKLWRRKRGDGAVGSSLRDQNHRQTVK. Residues 264–285 traverse the membrane as a helical segment; the sequence is MLAVVVFAFILCWLPFHVGRYL. The Extracellular segment spans residues 286–302; that stretch reads FSKSFEPGSLEIAQISQ. A helical transmembrane segment spans residues 303-326; the sequence is YCNLVSFVLFYLSAAINPILYNIM. Topologically, residues 327-366 are cytoplasmic; that stretch reads SKKYRVAVFKLLGFEPFSQRKLSTLKDESSRAWTKSSINT.

Belongs to the G-protein coupled receptor 1 family.

The protein resides in the cell membrane. In terms of biological role, receptor for ghrelin, coupled to G-alpha-11 proteins. Stimulates growth hormone secretion. Also binds other growth hormone releasing peptides (GHRP) (e.g. Met-enkephalin and GHRP-6) as well as non-peptide, low molecular weight secretagogues (e.g. L-692,429, MK-0677, adenosine). The protein is Growth hormone secretagogue receptor type 1 (GHSR) of Oryctolagus cuniculus (Rabbit).